The primary structure comprises 216 residues: Probable GTP-binding protein EngB (216 aa).

Residues 37–214 form the EngB-type G domain; that stretch reads GSVEIAFAGR…RAAMIRLLDE (178 aa). Residues 45-52, 72-76, 92-95, 159-162, and 193-195 each bind GTP; these read GRSNVGKS, GRTQE, DMPG, TKAD, and TSS. The Mg(2+) site is built by serine 52 and threonine 74.

This sequence belongs to the TRAFAC class TrmE-Era-EngA-EngB-Septin-like GTPase superfamily. EngB GTPase family. The cofactor is Mg(2+).

Necessary for normal cell division and for the maintenance of normal septation. The protein is Probable GTP-binding protein EngB of Rhodopseudomonas palustris (strain ATCC BAA-98 / CGA009).